The following is a 458-amino-acid chain: Jacalin-related lectin 22 (458 aa).

Jacalin-type lectin domains are found at residues 5-153, 160-301, and 311-453; these read YRKL…YFVL, LYKL…YFGP, and SKKL…TIVP.

This sequence belongs to the jacalin lectin family. Component of the PYK10 complex, at least composed of PYK10/BGLU23, BGLU21, BGLU22, JAL22, JAL23, PBP1/JAL30, PBP2/JAL31, JAL32, JAL33, JAL34, JAL35, GLL22 and GLL23.

Inhibitor-type lectin that may regulate the correct polymerization and activation of BGLU23/PYK10 upon tissue damage. This is Jacalin-related lectin 22 (JAL22) from Arabidopsis thaliana (Mouse-ear cress).